The sequence spans 314 residues: 2-methoxy-6-polyprenyl-1,4-benzoquinol methylase, mitochondrial (314 aa).

The transit peptide at 1-19 directs the protein to the mitochondrion; sequence MLQSLNRSVRYLSTSIGSR. S-adenosyl-L-methionine contacts are provided by residues threonine 109, aspartate 154, 186–187, and serine 203; that span reads NS.

Belongs to the class I-like SAM-binding methyltransferase superfamily. MenG/UbiE family. Component of a multi-subunit COQ enzyme complex.

It is found in the mitochondrion inner membrane. The enzyme catalyses a 2-methoxy-6-(all-trans-polyprenyl)benzene-1,4-diol + S-adenosyl-L-methionine = a 5-methoxy-2-methyl-3-(all-trans-polyprenyl)benzene-1,4-diol + S-adenosyl-L-homocysteine + H(+). Its pathway is cofactor biosynthesis; ubiquinone biosynthesis. Its function is as follows. Methyltransferase required for the conversion of 2-polyprenyl-6-methoxy-1,4-benzoquinol (DDMQH2) to 2-polyprenyl-3-methyl-6-methoxy-1,4-benzoquinol (DMQH2). The sequence is that of 2-methoxy-6-polyprenyl-1,4-benzoquinol methylase, mitochondrial from Dictyostelium discoideum (Social amoeba).